We begin with the raw amino-acid sequence, 837 residues long: Katanin p80 WD40 repeat-containing subunit B1 homolog KTN80.4 (837 aa).

7 WD repeats span residues 14–54 (AHSA…AILS), 57–96 (GHSS…IVRT), 99–138 (GHRS…CIHT), 141–182 (GHTR…TEFK), 184–222 (HEGQ…LIGS), 225–265 (PETA…DGVD), and 267–304 (GWSR…TEPC). Positions 115–131 (FFASGSLDTNLKIWDIR) match the DWD box motif. Disordered regions lie at residues 307-328 (GDTA…DPVV), 358-462 (GRLS…ANPV), and 501-614 (LQAA…LVIN). Composition is skewed to polar residues over residues 376–387 (IGRSSTSQNSES) and 412–450 (TFSS…TSRR). A compositionally biased stretch (low complexity) spans 509-520 (SPSSRNNPDLPD). 2 stretches are compositionally biased toward basic and acidic residues: residues 553-563 (ATERSINDFRY) and 580-595 (RNHD…RSNR).

This sequence belongs to the WD repeat KATNB1 family. Component of KTN80-KTN1 complexes composed of a hexamer of KTN1-KTN80 heterodimers that sense microtubule (MT) geometry to confer precise MT severing. Interacts directly with AAA1/KTN1, and weakly with KTN80.1 and KTN80.3. In terms of tissue distribution, expressed in siliques, flowers, leaves, stems and roots.

The protein resides in the cytoplasm. Its subcellular location is the cytoskeleton. Its function is as follows. May participate in a complex which severs microtubules in an ATP-dependent manner. This activity may promote rapid reorganization of cellular microtubule arrays. Confers precision to microtubule (MT) severing by specific targeting of KTN1 to MT cleavage sites such as crossover or branching nucleation sites. Together with other KTN80s, regulates cell elongation by modulating MT organization. This chain is Katanin p80 WD40 repeat-containing subunit B1 homolog KTN80.4, found in Arabidopsis thaliana (Mouse-ear cress).